Consider the following 589-residue polypeptide: ATP-dependent lipid A-core flippase (589 aa).

Helical transmembrane passes span 29–49 (LLLV…TGFL), 70–90 (WLPV…YITD), 157–177 (VIGA…TILV), 261–281 (MIGA…ALAG), and 283–303 (LTAG…PGLK). The ABC transmembrane type-1 domain maps to 32-314 (VAALIAALIE…LTNVQNMVQR (283 aa)). The region spanning 346–582 (IEFRDVTARY…GGLYSHLHGM (237 aa)) is the ABC transporter domain. 380-387 (GRSGSGKS) is an ATP binding site.

The protein belongs to the ABC transporter superfamily. Lipid exporter (TC 3.A.1.106) family. As to quaternary structure, homodimer.

It localises to the cell inner membrane. It carries out the reaction ATP + H2O + lipid A-core oligosaccharideSide 1 = ADP + phosphate + lipid A-core oligosaccharideSide 2.. In terms of biological role, involved in lipopolysaccharide (LPS) biosynthesis. Translocates lipid A-core from the inner to the outer leaflet of the inner membrane. Transmembrane domains (TMD) form a pore in the inner membrane and the ATP-binding domain (NBD) is responsible for energy generation. The sequence is that of ATP-dependent lipid A-core flippase from Xanthomonas campestris pv. campestris (strain 8004).